Consider the following 350-residue polypeptide: Protein disulfide isomerase Creld2 (350 aa).

The first 22 residues, 1-22 (MHLLLAAAFGLLLLLPPPGAVA), serve as a signal peptide directing secretion. The CXXC signature appears at 29–32 (CQRC). 4 cysteine pairs are disulfide-bonded: Cys29–Cys32, Cys138–Cys152, Cys146–Cys164, and Cys166–Cys175. One can recognise an EGF-like 1 domain in the interval 134–176 (DCQECQGGSERPCSGNGYCSGDGSRQGDGSCQCHTGYKGPLCI). One copy of the FU 1 repeat lies at 191–238 (HSICSACDESCKTCSGPSNKDCIQCEVGWARVEDACVDVDECAAETSP). N-linked (GlcNAc...) asparagine glycosylation occurs at Asn249. Residues 251 to 298 (SYTCEDCDSTCVGCTGKGPANCKECIAGYTKESGQCTDIDECSLEEKA) form an FU 2 repeat. The short motif at 261-264 (CVGC) is the CXXC element. Intrachain disulfides connect Cys261–Cys264, Cys292–Cys306, Cys299–Cys315, and Cys317–Cys328. The EGF-like 2; calcium-binding domain maps to 288–329 (DIDECSLEEKACKRKNENCYNVPGSFVCVCPEGFEETEDACV).

The protein belongs to the CRELD family. As to quaternary structure, interacts with CHRNA4. Component of a complex containing at least CRELD2, MANF, MATN3 and PDIA4. Expressed in chondrocytes (at protein level).

The protein localises to the endoplasmic reticulum. The catalysed reaction is Catalyzes the rearrangement of -S-S- bonds in proteins.. In terms of biological role, protein disulfide isomerase. Might play a role in the unfolded protein response. May regulate transport of alpha4-beta2 neuronal acetylcholine receptor. The sequence is that of Protein disulfide isomerase Creld2 (Creld2) from Mus musculus (Mouse).